A 351-amino-acid polypeptide reads, in one-letter code: Delta(7)-sterol 5(6)-desaturase (351 aa).

3 helical membrane-spanning segments follow: residues 88–108 (LSLFLVTTVFGWLLYLIVASF), 136–156 (GLGAIPYMAVMTVPWFLLELH), and 173–193 (VRLALEALFFILFTDFGIYLL). The Fatty acid hydroxylase domain occupies 180–305 (LFFILFTDFG…FTTLWDRLGG (126 aa)). The short motif at 194–198 (HRWLH) is the Histidine box-1 element. The short motif at 207 to 211 (HKKHH) is the Histidine box-2 element. The helical transmembrane segment at 237-257 (HLFPMLFPLHKVSYLVLFTFV) threads the bilayer. The short motif at 282–286 (HTVHH) is the Histidine box-3 element.

The protein belongs to the sterol desaturase family. It depends on Fe cation as a cofactor.

It localises to the endoplasmic reticulum membrane. The catalysed reaction is a Delta(7)-sterol + 2 Fe(II)-[cytochrome b5] + O2 + 2 H(+) = a Delta(5),Delta(7)-sterol + 2 Fe(III)-[cytochrome b5] + 2 H2O. It functions in the pathway steroid metabolism; ergosterol biosynthesis; ergosterol from zymosterol: step 3/5. Its function is as follows. Catalyzes the introduction of a C-5 double bond in the B ring of ergosterol. May contribute to the regulation of ergosterol biosynthesis. The polypeptide is Delta(7)-sterol 5(6)-desaturase (ERG3) (Eremothecium gossypii (strain ATCC 10895 / CBS 109.51 / FGSC 9923 / NRRL Y-1056) (Yeast)).